A 311-amino-acid chain; its full sequence is Porphobilinogen deaminase (311 aa).

An S-(dipyrrolylmethanemethyl)cysteine modification is found at Cys242.

The protein belongs to the HMBS family. In terms of assembly, monomer. It depends on dipyrromethane as a cofactor.

It catalyses the reaction 4 porphobilinogen + H2O = hydroxymethylbilane + 4 NH4(+). The protein operates within porphyrin-containing compound metabolism; protoporphyrin-IX biosynthesis; coproporphyrinogen-III from 5-aminolevulinate: step 2/4. Its function is as follows. Tetrapolymerization of the monopyrrole PBG into the hydroxymethylbilane pre-uroporphyrinogen in several discrete steps. The chain is Porphobilinogen deaminase from Baumannia cicadellinicola subsp. Homalodisca coagulata.